The primary structure comprises 688 residues: Elongation factor G (688 aa).

Residues 8–282 (ERTRNIGIMA…AVLDYLPAPT (275 aa)) enclose the tr-type G domain. GTP contacts are provided by residues 17–24 (AHIDAGKT), 81–85 (DTPGH), and 135–138 (NKMD).

It belongs to the TRAFAC class translation factor GTPase superfamily. Classic translation factor GTPase family. EF-G/EF-2 subfamily.

Its subcellular location is the cytoplasm. Its function is as follows. Catalyzes the GTP-dependent ribosomal translocation step during translation elongation. During this step, the ribosome changes from the pre-translocational (PRE) to the post-translocational (POST) state as the newly formed A-site-bound peptidyl-tRNA and P-site-bound deacylated tRNA move to the P and E sites, respectively. Catalyzes the coordinated movement of the two tRNA molecules, the mRNA and conformational changes in the ribosome. The chain is Elongation factor G from Clostridioides difficile (strain 630) (Peptoclostridium difficile).